The primary structure comprises 752 residues: MRFVSLAVGAALLGAAGASSISSNVGLLKANGVALGNWEAAYEKASAFVSGLTTDQKLALITGSNVESANGNFTPLYFLDGDMGLQDFYYVSAFSLSSALAMTWDRDAIYEQAKAVGSEFYNKGVQVVAGPTSQPLGRTPWGGRGVEGFGPDPYLNGLATGLTTKGYVDAGVIPGGKHFLLYEQETNRTSSFGSSGEGSPYSSNADDKTIHETYLWPFYDAVKNGAGAVMCAMTKVNGTMACENSDLLMKMLKTELGFPGMVWPDMNGQNSAKGSALGGEDYGSSSIWSTSTMESFLSNGTLSEARLNDMAIRNLIGYYYVNLDNGRQPTRQTTDVYVDVRANHSKLIRENGAKSMALLKNEGVLPLSKPHVMSIFGAHAGPIMGGPNSNVDVMGSGPTYQGHLATGSGSGMASMPYLITPYDALTNKAAQDGTVLRWVLNDTYSSGGGSSLVPSSTSSTAVEPSFENFATGSDICLVFINALAGEGADRTELYNADQDAMVNTVADNCNNTVAVVNTVGPRLLDQWIEHDNVTAVLYGSLLGQESGNSIVDLLYGDVNPSGRLVHTIAKNESDYNVGLCYTAQCNFTEGVYLDYRYFDAHNITPRYPFGHGLSYTTFHYSSLAIKAPSSITKAPKGNLTVGGPSDLWDVVGTVSARIANNGTLSGAEVPQLYLGFPDSADQPVRQLRGFDRVELSAGQEAVVTFNLRRRDISYWNLKTQQWMVAGGKYTVFVGGSSRDLRLNGTFFLWVGS.

Positions 1–18 (MRFVSLAVGAALLGAAGA) are cleaved as a signal peptide. Residues asparagine 187 and asparagine 237 are each glycosylated (N-linked (GlcNAc...) asparagine). Residue aspartate 265 is part of the active site. Asparagine 299, asparagine 343, asparagine 441, asparagine 510, asparagine 532, asparagine 571, asparagine 586, asparagine 638, asparagine 661, and asparagine 743 each carry an N-linked (GlcNAc...) asparagine glycan.

It belongs to the glycosyl hydrolase 3 family.

The protein localises to the secreted. The catalysed reaction is Hydrolysis of terminal, non-reducing beta-D-glucosyl residues with release of beta-D-glucose.. Its pathway is glycan metabolism; cellulose degradation. Beta-glucosidases are one of a number of cellulolytic enzymes involved in the degradation of cellulosic biomass. Catalyzes the last step releasing glucose from the inhibitory cellobiose. This chain is Probable beta-glucosidase D (bglD), found in Aspergillus oryzae (strain ATCC 42149 / RIB 40) (Yellow koji mold).